Consider the following 198-residue polypeptide: Ribonuclease HII (198 aa).

In terms of domain architecture, RNase H type-2 spans 10 to 198; the sequence is HLVAGVDEVG…PVKRALELAS (189 aa). Positions 16, 17, and 108 each coordinate a divalent metal cation.

It belongs to the RNase HII family. Mn(2+) serves as cofactor. The cofactor is Mg(2+).

Its subcellular location is the cytoplasm. It carries out the reaction Endonucleolytic cleavage to 5'-phosphomonoester.. Its function is as follows. Endonuclease that specifically degrades the RNA of RNA-DNA hybrids. The protein is Ribonuclease HII of Salmonella arizonae (strain ATCC BAA-731 / CDC346-86 / RSK2980).